Reading from the N-terminus, the 491-residue chain is Glycogen synthase 1 (491 aa).

Residue Lys-15 coordinates ADP-alpha-D-glucose.

Belongs to the glycosyltransferase 1 family. Bacterial/plant glycogen synthase subfamily.

It carries out the reaction [(1-&gt;4)-alpha-D-glucosyl](n) + ADP-alpha-D-glucose = [(1-&gt;4)-alpha-D-glucosyl](n+1) + ADP + H(+). It functions in the pathway glycan biosynthesis; glycogen biosynthesis. Its function is as follows. Synthesizes alpha-1,4-glucan chains using ADP-glucose. This Synechococcus sp. (strain JA-2-3B'a(2-13)) (Cyanobacteria bacterium Yellowstone B-Prime) protein is Glycogen synthase 1.